Here is a 181-residue protein sequence, read N- to C-terminus: Ferritin BfrB (181 aa).

A Ferritin-like diiron domain is found at 15 to 150; that stretch reads MQEQIHNEFT…TLVRVADRAG (136 aa). Fe cation is bound by residues Glu22, Glu55, His58, Glu99, and Gln132.

It belongs to the ferritin family. Prokaryotic subfamily. Homooligomer of 24 subunits that are packed together to form an approximately spherical molecule with a central cavity, in which large amounts of iron can be stored.

It carries out the reaction 4 Fe(2+) + O2 + 4 H(+) = 4 Fe(3+) + 2 H2O. In terms of biological role, iron-storage protein that displays ferroxidase activity, catalyzing the oxidation of Fe(2+) ions into Fe(3+) ions, that can then be deposited as a ferric-oxide mineral core within the central cavity of the protein complex. In Mycobacterium tuberculosis (strain ATCC 35801 / TMC 107 / Erdman), this protein is Ferritin BfrB (bfrB).